The following is a 229-amino-acid chain: MLSGLIQRFEEEKMKHNQERVEELSLVHVDDTISQPPRYAPSAPMPSSMPTVALEILDKAMSNTTGATQTQKAEKAAFASYAEAFRDDVRLRQIKRHVNEQILPKLKSDLGGLKKKRAIIHMTLLIAAVVALLTSVCTLSSDMSVAFKLNGTSAEIPQWFKSLNPMLGVVNLGATFLMMVCAKSERSLNQQIDMIKKEVMKKQSYNDAVRMSFTEFSSVPLDGFELPLT.

The next 2 membrane-spanning stretches (helical) occupy residues 119-139 and 162-182; these read IIHMTLLIAAVVALLTSVCTL and SLNPMLGVVNLGATFLMMVCA.

Belongs to the orbivirus NS3 family. Forms homooligomers via coiled-coil motif. Interacts with host OPTN; this interaction inhibits innate immune response.

The protein localises to the host cell membrane. Its subcellular location is the host Golgi apparatus. In terms of biological role, plays a role in the inhibition of host innate immune response. Interacts with host OPTN and thus inhibits the recruitment of TBK1 to the host Golgi apparatus. In turn, downstream partner IRF3 cannot be activated and IFN-beta production is impaired. Its function is as follows. Facilitates viral particle release either by increasing plasma membrane permeability through a viroporin-like activity or by viral budding. The sequence is that of Non-structural protein P8 (Segment-10) from Antilocapra americana (Pronghorn).